The chain runs to 61 residues: Metallothionein-2 (61 aa).

Position 1 is an N-acetylmethionine (Met1). Residues 1–29 are beta; that stretch reads MDPNCSCVAGDSCTCAGSCKCKECKCTSC. 20 residues coordinate a divalent metal cation: Cys5, Cys7, Cys13, Cys15, Cys19, Cys21, Cys24, Cys26, Cys29, Cys33, Cys34, Cys36, Cys37, Cys41, Cys44, Cys48, Cys50, Cys57, Cys59, and Cys60. Residues 20–25 form an antigenic epitope region; that stretch reads KCKECK. Residues 30-61 are alpha; it reads KKSCCSCCPVGCAKCAQGCICKGASDKCNCCA.

This sequence belongs to the metallothionein superfamily. Type 1 family.

Its function is as follows. Metallothioneins have a high content of cysteine residues that bind various heavy metals; these proteins are transcriptionally regulated by both heavy metals and glucocorticoids. The sequence is that of Metallothionein-2 (MT2) from Macaca fascicularis (Crab-eating macaque).